Consider the following 309-residue polypeptide: MITFLPIIFSILVVVTFVIGNFANGFIALVNSTEWVKRQKISFADQIVTALAVSRVGLLWVLLLNWYSTVLNPAFYSVELRTTAYNIWAVTGHFSNWLATSLSIFYLLKIANFSNLIFLHLKRRVKSVILVMLLGPLLFLACHLFVVNMNQIVWTKEYEGNMTWKIKLRRAMYLSDTTVTMLANLVPFTVTLISFLLLVCSLCEHLKKMQLHGKGSQDPSTKVHIKALQTVISFLLLCAIYFVSVIISVWSFKNLENKPVFMFCQAIGFSCSSAHPFILIWGNKKLKQPFLSVLWQMRYWVKGEKPSSS.

Position 1 (M1) is a topological domain, extracellular. A helical membrane pass occupies residues 2–22; it reads ITFLPIIFSILVVVTFVIGNF. Residues 23–55 are Cytoplasmic-facing; that stretch reads ANGFIALVNSTEWVKRQKISFADQIVTALAVSR. Residues 56–76 traverse the membrane as a helical segment; it reads VGLLWVLLLNWYSTVLNPAFY. At 77 to 98 the chain is on the extracellular side; the sequence is SVELRTTAYNIWAVTGHFSNWL. Residues 99–119 form a helical membrane-spanning segment; it reads ATSLSIFYLLKIANFSNLIFL. Topologically, residues 120 to 126 are cytoplasmic; the sequence is HLKRRVK. A helical membrane pass occupies residues 127–147; it reads SVILVMLLGPLLFLACHLFVV. The Extracellular segment spans residues 148–178; it reads NMNQIVWTKEYEGNMTWKIKLRRAMYLSDTT. N-linked (GlcNAc...) asparagine glycosylation occurs at N161. The chain crosses the membrane as a helical span at residues 179–199; that stretch reads VTMLANLVPFTVTLISFLLLV. At 200 to 229 the chain is on the cytoplasmic side; that stretch reads CSLCEHLKKMQLHGKGSQDPSTKVHIKALQ. The chain crosses the membrane as a helical span at residues 230–250; that stretch reads TVISFLLLCAIYFVSVIISVW. Topologically, residues 251–259 are extracellular; that stretch reads SFKNLENKP. Residues 260–280 traverse the membrane as a helical segment; it reads VFMFCQAIGFSCSSAHPFILI. Residues 281–309 are Cytoplasmic-facing; sequence WGNKKLKQPFLSVLWQMRYWVKGEKPSSS.

Belongs to the G-protein coupled receptor T2R family.

Its subcellular location is the membrane. In terms of biological role, receptor that may play a role in the perception of bitterness and is gustducin-linked. May play a role in sensing the chemical composition of the gastrointestinal content. The activity of this receptor may stimulate alpha gustducin, mediate PLC-beta-2 activation and lead to the gating of TRPM5. This chain is Taste receptor type 2 member 45 (TAS2R45), found in Pan paniscus (Pygmy chimpanzee).